Consider the following 391-residue polypeptide: tRNA (cytosine(38)-C(5))-methyltransferase (391 aa).

Residues 4–391 (LRVLELYSGI…VSKLLTVLCE (388 aa)) form the SAM-dependent MTase C5-type domain. Residues 13–15 (IGG), Asp-34, 57–58 (IE), and Ser-76 contribute to the S-adenosyl-L-methionine site. Cys-79 is a catalytic residue. Residue Ser-376 coordinates S-adenosyl-L-methionine.

This sequence belongs to the class I-like SAM-binding methyltransferase superfamily. C5-methyltransferase family.

It is found in the cytoplasm. The catalysed reaction is cytidine(38) in tRNA + S-adenosyl-L-methionine = 5-methylcytidine(38) in tRNA + S-adenosyl-L-homocysteine + H(+). Its function is as follows. Specifically methylates cytosine 38 in the anticodon loop of tRNA(Asp). Has higher activity on tRNA(Asp) modified with queuosine at position 34. This chain is tRNA (cytosine(38)-C(5))-methyltransferase (Trdmt1), found in Rattus norvegicus (Rat).